A 126-amino-acid chain; its full sequence is Glycerol dehydrogenase small subunit (126 aa).

The next 4 membrane-spanning stretches (helical) occupy residues 13-33 (WLTL…VIGG), 41-61 (GSTY…FMLM), 67-87 (AFLY…EVGF), and 92-112 (LLPR…TIPV).

The protein resides in the cell membrane. It catalyses the reaction glycerol + A = dihydroxyacetone + AH2. In terms of biological role, catalyzes the oxidation of glycerol to glycerone. Also acts, more slowly, on a number of other polyols including D-sorbitol, D-arabinitol, D-mannitol, meso-erythritol, adonitol and propylene glycol. The sequence is that of Glycerol dehydrogenase small subunit (sldB) from Gluconobacter thailandicus.